A 585-amino-acid chain; its full sequence is Testis-specific serine kinase substrate (585 aa).

Low complexity predominate over residues 91–108 (EPDSSGTDSTTEDSGPLA). Residues 91 to 126 (EPDSSGTDSTTEDSGPLALPGPPASPTTPWAPEDPD) form a disordered region. Residues Ser224, Ser281, and Ser309 each carry the phosphoserine modification. Disordered stretches follow at residues 262-309 (SRHG…PSLS) and 559-585 (LEGS…GSEQ).

Post-translationally, phosphorylated on serine residue(s) by STK22A/TSSK1 and STK22B/TSSK2.

The protein resides in the cytoplasm. It localises to the cytoskeleton. It is found in the microtubule organizing center. Its subcellular location is the centrosome. The protein localises to the centriole. Functionally, may play a role in testicular physiology, most probably in the process of spermatogenesis or spermatid development. In Rattus norvegicus (Rat), this protein is Testis-specific serine kinase substrate (Tsks).